A 284-amino-acid chain; its full sequence is 4-diphosphocytidyl-2-C-methyl-D-erythritol kinase (284 aa).

K14 is an active-site residue. Residue 98 to 108 (PMGGGLGGGSS) coordinates ATP. The active site involves D140.

Belongs to the GHMP kinase family. IspE subfamily.

The catalysed reaction is 4-CDP-2-C-methyl-D-erythritol + ATP = 4-CDP-2-C-methyl-D-erythritol 2-phosphate + ADP + H(+). It participates in isoprenoid biosynthesis; isopentenyl diphosphate biosynthesis via DXP pathway; isopentenyl diphosphate from 1-deoxy-D-xylulose 5-phosphate: step 3/6. Functionally, catalyzes the phosphorylation of the position 2 hydroxy group of 4-diphosphocytidyl-2C-methyl-D-erythritol. This chain is 4-diphosphocytidyl-2-C-methyl-D-erythritol kinase, found in Shewanella baltica (strain OS195).